A 556-amino-acid polypeptide reads, in one-letter code: Membrane protein insertase YidC (556 aa).

5 helical membrane passes run 6 to 26, 332 to 352, 358 to 378, 428 to 448, and 501 to 521; these read IVLY…WQID, LDLT…FSLM, VVGN…LAFY, LGGC…YWVL, and VMMF…SGLV.

It belongs to the OXA1/ALB3/YidC family. Type 1 subfamily. As to quaternary structure, interacts with the Sec translocase complex via SecD. Specifically interacts with transmembrane segments of nascent integral membrane proteins during membrane integration.

The protein localises to the cell inner membrane. In terms of biological role, required for the insertion and/or proper folding and/or complex formation of integral membrane proteins into the membrane. Involved in integration of membrane proteins that insert both dependently and independently of the Sec translocase complex, as well as at least some lipoproteins. Aids folding of multispanning membrane proteins. The polypeptide is Membrane protein insertase YidC (Legionella pneumophila (strain Corby)).